The primary structure comprises 582 residues: Probable inorganic phosphate transporter 1-9 (582 aa).

Over 1 to 23 (MAPRIRVLAALDQARTQYYHFKA) the chain is Cytoplasmic. Residues 24-44 (IVIAGMGLFTDSYDLFCISPV) form a helical membrane-spanning segment. Residues 45 to 75 (MKIFGRVYYAPSGSVDGSGSGPGVTPPAVVS) lie on the Extracellular side of the membrane. The chain crosses the membrane as a helical span at residues 76-96 (ATVGVALLGAVAGNVVFGALG). At 97–103 (DRVGRRR) the chain is on the cytoplasmic side. The chain crosses the membrane as a helical span at residues 104 to 124 (VYGACLLLMVCSSVGSGLSVC). Over 125 to 130 (RTRRCA) the chain is Extracellular. The helical transmembrane segment at 131-151 (LASLCFFRFLLGVGVGGDYPL) threads the bilayer. Residues 152-165 (SATIMSEFANRRTR) are Cytoplasmic-facing. Residues 166–186 (GAFIAAVFSMQGFGILVSSAV) form a helical membrane-spanning segment. The Extracellular segment spans residues 187 to 210 (TMAVAAAFDHYTGYPAPLDTPECA). A helical membrane pass occupies residues 211–231 (DLAWRIILMAGAVPAALTYYW). Residues 232–307 (RMSMPETARY…RRFVRQHGRD (76 aa)) lie on the Cytoplasmic side of the membrane. Residues 308 to 328 (LFACAAAWFLLDIPYYSSTLF) traverse the membrane as a helical segment. At 329-354 (QSQIYRPWFPPAAKVNAFQEAFNVAK) the chain is on the extracellular side. The helical transmembrane segment at 355 to 375 (FQAVIAVASTIPGYFAAMLLI) threads the bilayer. The Cytoplasmic portion of the chain corresponds to 376–385 (ERAGRRRLQM). The helical transmembrane segment at 386–406 (AGFLLMAVFLFALAGPYDGYW) threads the bilayer. At 407–415 (RDHAKTAGY) the chain is on the extracellular side. The helical transmembrane segment at 416–436 (IVLYSLTFFSANLGPNTTTFI) threads the bilayer. The Cytoplasmic segment spans residues 437–451 (LPAELFPARFRSTCH). A helical membrane pass occupies residues 452 to 472 (GLSGAAGKLGALVGSIGFLWA). Residues 473-485 (SQQKDGAAAGHLP) are Extracellular-facing. A helical membrane pass occupies residues 486-506 (GIGMMYALFVLGGICLLGLAL). At 507-582 (TYAFTPETMT…SPILPHRMSL (76 aa)) the chain is on the cytoplasmic side. Positions 519–541 (LEENESSVQAQSQVGDGGSDAGN) are disordered.

This sequence belongs to the major facilitator superfamily. Phosphate:H(+) symporter (TC 2.A.1.9) family. As to expression, expressed at low levels in roots.

Its subcellular location is the membrane. Functionally, high-affinity transporter for external inorganic phosphate. This Oryza sativa subsp. japonica (Rice) protein is Probable inorganic phosphate transporter 1-9 (PHT1-9).